The sequence spans 154 residues: Ribosomal RNA large subunit methyltransferase H (154 aa).

S-adenosyl-L-methionine-binding positions include leucine 70, glycine 102, and 121–126 (LSRMTL).

This sequence belongs to the RNA methyltransferase RlmH family. As to quaternary structure, homodimer.

Its subcellular location is the cytoplasm. The enzyme catalyses pseudouridine(1915) in 23S rRNA + S-adenosyl-L-methionine = N(3)-methylpseudouridine(1915) in 23S rRNA + S-adenosyl-L-homocysteine + H(+). Its function is as follows. Specifically methylates the pseudouridine at position 1915 (m3Psi1915) in 23S rRNA. This Geobacter sp. (strain M21) protein is Ribosomal RNA large subunit methyltransferase H.